The sequence spans 163 residues: Disulfide bond formation protein B (163 aa).

The Cytoplasmic segment spans residues 1–9; that stretch reads MKKLTYRKI. Residues 10 to 26 form a helical membrane-spanning segment; that stretch reads QSFQAIITVLVIFASFY. Topologically, residues 27–44 are periplasmic; sequence LEYAAGLQPCPLCLMQRV. Cys36 and Cys39 form a disulfide bridge. The helical transmembrane segment at 45 to 58 threads the bilayer; that stretch reads CVFILLGLMGVSLG. Over 59 to 64 the chain is Cytoplasmic; that stretch reads TVKKAH. A helical transmembrane segment spans residues 65–82; the sequence is IVSLIQFQVACAGLYFSL. The Periplasmic portion of the chain corresponds to 83-139; the sequence is RQLWLQSLPSDQAPACMPGLDVLIQYFPWQTVAKALFWGAGDCAEVTWTMFGVSMPG. Cysteines 98 and 125 form a disulfide. The helical transmembrane segment at 140 to 158 threads the bilayer; the sequence is WAAMYFLSMAIMGLFLFFR. Topologically, residues 159–163 are cytoplasmic; sequence TRTIN.

Belongs to the DsbB family.

It is found in the cell inner membrane. Required for disulfide bond formation in some periplasmic proteins. Acts by oxidizing the DsbA protein. The sequence is that of Disulfide bond formation protein B from Legionella pneumophila (strain Lens).